A 1099-amino-acid polypeptide reads, in one-letter code: Glutamine--fructose-6-phosphate aminotransferase [isomerizing] (1099 aa).

Cysteine 2 (nucleophile; for GATase activity) is an active-site residue. The Glutamine amidotransferase type-2; first part domain maps to cysteine 2–histidine 71. In terms of domain architecture, HTH cro/C1-type spans leucine 198–isoleucine 253. In terms of domain architecture, DOD-type homing endonuclease spans isoleucine 278 to isoleucine 413. The region spanning serine 571 to lysine 723 is the Glutamine amidotransferase type-2; second part domain. SIS domains lie at leucine 786–arginine 923 and threonine 948–proline 1089. Lysine 1094 serves as the catalytic For Fru-6P isomerization activity.

This sequence in the C-terminal section; belongs to the SIS family. GFAT subfamily. In terms of assembly, homodimer. This protein undergoes a protein self splicing that involves a post-translational excision of the intervening region (intein) followed by peptide ligation.

The protein localises to the cytoplasm. It catalyses the reaction D-fructose 6-phosphate + L-glutamine = D-glucosamine 6-phosphate + L-glutamate. Its function is as follows. Catalyzes the first step in hexosamine metabolism, converting fructose-6P into glucosamine-6P using glutamine as a nitrogen source. In Methanocaldococcus jannaschii (strain ATCC 43067 / DSM 2661 / JAL-1 / JCM 10045 / NBRC 100440) (Methanococcus jannaschii), this protein is Glutamine--fructose-6-phosphate aminotransferase [isomerizing] (glmS).